The primary structure comprises 211 residues: Large ribosomal subunit protein uL3 (211 aa).

Residues 134–155 (ATHGNSLSHRAPGSIGQNQTPG) are disordered. Gln152 is subject to N5-methylglutamine.

The protein belongs to the universal ribosomal protein uL3 family. Part of the 50S ribosomal subunit. Forms a cluster with proteins L14 and L19. In terms of processing, methylated by PrmB.

Functionally, one of the primary rRNA binding proteins, it binds directly near the 3'-end of the 23S rRNA, where it nucleates assembly of the 50S subunit. In Methylococcus capsulatus (strain ATCC 33009 / NCIMB 11132 / Bath), this protein is Large ribosomal subunit protein uL3.